A 401-amino-acid chain; its full sequence is Multidrug resistance protein MdtH (401 aa).

11 helical membrane passes run tyrosine 13–isoleucine 33, serine 34–leucine 54, isoleucine 88–leucine 108, isoleucine 139–leucine 159, phenylalanine 164–tryptophan 184, phenylalanine 211–methionine 231, tyrosine 248–methionine 268, glutamate 275–valine 295, leucine 298–alanine 318, leucine 341–glycine 361, and phenylalanine 366–tyrosine 386.

It belongs to the major facilitator superfamily. DHA1 family. MdtH (TC 2.A.1.2.21) subfamily.

The protein resides in the cell inner membrane. In Blochmanniella floridana, this protein is Multidrug resistance protein MdtH.